The following is a 513-amino-acid chain: Histidine ammonia-lyase (513 aa).

Positions 144-146 (ASG) form a cross-link, 5-imidazolinone (Ala-Gly). Position 145 is a 2,3-didehydroalanine (Ser) (Ser-145).

It belongs to the PAL/histidase family. Post-translationally, contains an active site 4-methylidene-imidazol-5-one (MIO), which is formed autocatalytically by cyclization and dehydration of residues Ala-Ser-Gly.

Its subcellular location is the cytoplasm. The enzyme catalyses L-histidine = trans-urocanate + NH4(+). Its pathway is amino-acid degradation; L-histidine degradation into L-glutamate; N-formimidoyl-L-glutamate from L-histidine: step 1/3. In Streptococcus sanguinis (strain SK36), this protein is Histidine ammonia-lyase.